The primary structure comprises 574 residues: Proline--tRNA ligase (574 aa).

Belongs to the class-II aminoacyl-tRNA synthetase family. ProS type 1 subfamily. In terms of assembly, homodimer.

It localises to the cytoplasm. The enzyme catalyses tRNA(Pro) + L-proline + ATP = L-prolyl-tRNA(Pro) + AMP + diphosphate. Catalyzes the attachment of proline to tRNA(Pro) in a two-step reaction: proline is first activated by ATP to form Pro-AMP and then transferred to the acceptor end of tRNA(Pro). As ProRS can inadvertently accommodate and process non-cognate amino acids such as alanine and cysteine, to avoid such errors it has two additional distinct editing activities against alanine. One activity is designated as 'pretransfer' editing and involves the tRNA(Pro)-independent hydrolysis of activated Ala-AMP. The other activity is designated 'posttransfer' editing and involves deacylation of mischarged Ala-tRNA(Pro). The misacylated Cys-tRNA(Pro) is not edited by ProRS. The protein is Proline--tRNA ligase of Nitratidesulfovibrio vulgaris (strain DP4) (Desulfovibrio vulgaris).